The chain runs to 194 residues: Lectin-C (194 aa).

An N-terminal signal peptide occupies residues 1–26; the sequence is MKRSNSIAVMLVLVLSSLMLLLPVEG. Positions 27–44 are cleaved as a propeptide — removed in mature form; it reads QGHEGHGVGEILLMGKLG. Chitin-binding type-1 domains lie at 45 to 86, 87 to 127, and 128 to 168; these read APVC…QCDY, NRCG…QCSY, and WRCG…QCDL. Disulfide bonds link cysteine 48–cysteine 63, cysteine 57–cysteine 69, cysteine 62–cysteine 76, cysteine 80–cysteine 84, cysteine 89–cysteine 104, cysteine 98–cysteine 110, cysteine 103–cysteine 117, cysteine 121–cysteine 125, cysteine 130–cysteine 145, cysteine 139–cysteine 151, cysteine 144–cysteine 158, and cysteine 162–cysteine 166. The propeptide at 171-194 is removed in mature form; sequence LLPSPLRRIIAIRKLKANLANMLS.

Homodimer. The homodimers are asymmetric; formed in a 'head-to-tail' fashion via hydrophobic interactions between aromatic residues of the carbohydrate-binding sites of each subunit.

In terms of biological role, N-acetyl-D-glucosamine binding lectin. Almost no hemagglutinating activity towards human erythrocytes. Low mitogenic activity towards human peripheral blood lymphocytes. This chain is Lectin-C, found in Phytolacca americana (American pokeweed).